A 367-amino-acid chain; its full sequence is MIIDTTEIETINSFSKLESLKEVYGIIWMLFPILTLVLGITIGVLVIVWLEREISAGIQQRIGPEYAGPLGILQALADGTKLLLKENLIPSTGDTRLFSIGPSIAVISIFLSYSVIPFGDHLVLADLSIGVFFWIAISSIAPVGLLMSGYGSNNKYSFLGGLRAAAQSISYEIPLALCVLSISLRVIRLSNSLSTVDIVEAQSKYGFWGWNLWRQPIGFIVFLISSLAECERLPFDLPEAEEELVAGYQTEYSGIKFGLFYIASYLNLLVSSLFVTVLYLGGWNLSIPYIFVPELFGINKRGKVFGTLIGIFITLAKTYLFLFIPIATRWTLPRLRMDQLLNLGWKFLLPISLGNLLLTTSSQLLSL.

A run of 7 helical transmembrane segments spans residues 30–50 (LFPI…IVWL), 98–118 (FSIG…VIPF), 127–147 (LSIG…GLLM), 164–184 (AAAQ…SISL), 273–293 (LFVT…IFVP), 304–324 (VFGT…FLFI), and 340–360 (LLNL…LLTT).

It belongs to the complex I subunit 1 family. NDH is composed of at least 16 different subunits, 5 of which are encoded in the nucleus.

The protein localises to the plastid. The protein resides in the chloroplast thylakoid membrane. The catalysed reaction is a plastoquinone + NADH + (n+1) H(+)(in) = a plastoquinol + NAD(+) + n H(+)(out). It catalyses the reaction a plastoquinone + NADPH + (n+1) H(+)(in) = a plastoquinol + NADP(+) + n H(+)(out). Its function is as follows. NDH shuttles electrons from NAD(P)H:plastoquinone, via FMN and iron-sulfur (Fe-S) centers, to quinones in the photosynthetic chain and possibly in a chloroplast respiratory chain. The immediate electron acceptor for the enzyme in this species is believed to be plastoquinone. Couples the redox reaction to proton translocation, and thus conserves the redox energy in a proton gradient. This chain is NAD(P)H-quinone oxidoreductase subunit 1, chloroplastic, found in Nicotiana tabacum (Common tobacco).